We begin with the raw amino-acid sequence, 662 residues long: Protein associated with UVRAG as autophagy enhancer (662 aa).

Disordered stretches follow at residues 1–34 (MVSQ…RLLN) and 58–131 (DVQQ…SLSS). The segment covering 58–71 (DVQQQPQDLQSQVP) has biased composition (low complexity). The segment covering 100 to 113 (AETTLSEDTTDSVG) has biased composition (polar residues). A compositionally biased stretch (low complexity) spans 114–131 (SASPHGSSEKSSSFSLSS). Serine 157 is subject to Phosphoserine; by MTOR. Residues 196–235 (EVFVLPVDVEKENAHFYVADMIISAMEKMKCNILSQQQTE) form an interaction with UVRAG region. Residues lysine 483, lysine 523, lysine 533, lysine 573, and lysine 633 each carry the N6-acetyllysine modification.

As to quaternary structure, interacts with UVRAG; the interaction is direct and promotes association with the PI3K/PI3KC3 and HOPS complexes. Interacts with STX17. Phosphorylated by MTOR at Ser-157 under nutrient-rich conditions. Phosphorylation prevents acetylation by KAT5/TIP60 and impairs RUBCNL/PACER function and autophagosome maturation. Under autophagy induction, Phosphorylation by MTOR is repressed, enabling acetylation by KAT5/TIP60. Post-translationally, acetylated by KAT5/TIP60 under autophagy induction, promoting autophagosome maturation and lipid metabolism. Acetylation is prevented by phosphorylation by MTOR. Lys-483 and Lys-573 constitute the key sites for tuning function in autophagy. Expressed weakly in cervical carcinoma cell lines.

The protein resides in the cytoplasmic vesicle. Its subcellular location is the autophagosome membrane. Regulator of autophagy that promotes autophagosome maturation by facilitating the biogenesis of phosphatidylinositol 3-phosphate (PtdIns(3)P) in late steps of autophagy. Acts by antagonizing RUBCN, thereby stimulating phosphatidylinositol 3-kinase activity of the PI3K/PI3KC3 complex. Following anchorage to the autophagosomal SNARE STX17, promotes the recruitment of PI3K/PI3KC3 and HOPS complexes to the autophagosome to regulate the fusion specificity of autophagosomes with late endosomes/lysosomes. Binds phosphoinositides phosphatidylinositol 3-phosphate (PtdIns(3)P), 4-phosphate (PtdIns(4)P) and 5-phosphate (PtdIns(5)P). In addition to its role in autophagy, acts as a regulator of lipid and glycogen homeostasis. May act as a tumor suppressor. In Homo sapiens (Human), this protein is Protein associated with UVRAG as autophagy enhancer.